The primary structure comprises 258 residues: uncharacterized protein (258 aa).

This is an uncharacterized protein from Escherichia coli O157:H7.